Reading from the N-terminus, the 502-residue chain is Membrane-bound lytic murein transglycosylase F (502 aa).

Residues 1-33 (MSRFISTFRSSSAQLSIVLAVILATGCSQPTTL) form the signal peptide. The segment at 34–264 (QEIREEGVLH…QLAERFYGHL (231 aa)) is non-LT domain. Residues 265-502 (DRLNYVGART…PELRLIPPTL (238 aa)) form an LT domain region. Glu-311 is a catalytic residue. The tract at residues 457-502 (PSASGLEDQLAWLGDNEAGPEAPAKESQPDLRADLPPELRLIPPTL) is disordered. The segment covering 479 to 493 (PAKESQPDLRADLPP) has biased composition (basic and acidic residues).

In the N-terminal section; belongs to the bacterial solute-binding protein 3 family. It in the C-terminal section; belongs to the transglycosylase Slt family.

The protein localises to the cell outer membrane. The enzyme catalyses Exolytic cleavage of the (1-&gt;4)-beta-glycosidic linkage between N-acetylmuramic acid (MurNAc) and N-acetylglucosamine (GlcNAc) residues in peptidoglycan, from either the reducing or the non-reducing ends of the peptidoglycan chains, with concomitant formation of a 1,6-anhydrobond in the MurNAc residue.. Functionally, murein-degrading enzyme that degrades murein glycan strands and insoluble, high-molecular weight murein sacculi, with the concomitant formation of a 1,6-anhydromuramoyl product. Lytic transglycosylases (LTs) play an integral role in the metabolism of the peptidoglycan (PG) sacculus. Their lytic action creates space within the PG sacculus to allow for its expansion as well as for the insertion of various structures such as secretion systems and flagella. This chain is Membrane-bound lytic murein transglycosylase F, found in Marinobacter nauticus (strain ATCC 700491 / DSM 11845 / VT8) (Marinobacter aquaeolei).